A 1444-amino-acid chain; its full sequence is Bromodomain-containing protein 4 (1444 aa).

Disordered stretches follow at residues 1–44 (MGDG…PKRQ), 154–217 (VEIS…PQPI), 279–362 (AAPP…KQQE), 492–523 (PVMATASSSDTSSDSSSESESSTDDSEEERAQ), 540–645 (AALS…GGAA), 722–986 (CLRK…SSQP), and 1020–1422 (TSLM…RREA). Positions 11–27 (SGSSSSQGQPSSQAPSS) are enriched in low complexity. Residues 43–149 (RQTNQLQYLL…KVFLTKISEM (107 aa)) form the Bromo 1 domain. A compositionally biased stretch (polar residues) spans 186 to 196 (ASPQTRGLSNL). Pro residues predominate over residues 206–216 (PQGPPTLPPQP). A compositionally biased stretch (polar residues) spans 303–319 (TTTPTANDQLNESSPAE). The segment covering 327 to 347 (PRRDNTRPSKLPKKEAPDSQH) has biased composition (basic and acidic residues). Residues 358–467 (PKQQEQLRYC…DVFEMRFAKM (110 aa)) form the Bromo 2 domain. Residues 498-511 (SSSDTSSDSSSESE) show a composition bias toward low complexity. An NPS region region spans residues 498-517 (SSSDTSSDSSSESESSTDDS). A BID region region spans residues 538–610 (QLAALSQPQA…SKKLSKKEGG (73 aa)). The segment covering 549-569 (KPKKKEKEKKEKKKDKHKKKA) has biased composition (basic residues). Residues 633–730 (DTEEDLGLTG…SCLRKKKKPA (98 aa)) form the NET domain. Composition is skewed to low complexity over residues 746 to 760 (GTSSDSGSSSESSSS), 800 to 823 (LQPQTPALQPSIQLKQQQPQHPSP), 919 to 954 (LQQSTSQQQPPPQQTLVPPQQLQPQQQQPAPPQQQH), and 1036 to 1046 (PSLLQSVQVQS). Residues 1090-1109 (PLQTAQTQPGQHKVSMPSTK) show a composition bias toward polar residues. The segment covering 1110 to 1121 (AQQIIQQQQATQ) has biased composition (low complexity). The C-terminal (CTD) region stretch occupies residues 1126–1444 (RQHKADSYNS…LMAIFEENLF (319 aa)). The segment covering 1151–1163 (QIPQYSLVHQSPS) has biased composition (polar residues). Over residues 1246 to 1255 (QDKEKFKQEP) the composition is skewed to basic and acidic residues. Positions 1282 to 1296 (SSTTPSSGLKSSSDS) are enriched in low complexity. Over residues 1298 to 1357 (EQFRRAAREKEEREKALKAQVEQAEKDRLRKEQEKLRGRDEEDSIEPPRRPLEEPRRRQE) the composition is skewed to basic and acidic residues. A compositionally biased stretch (low complexity) spans 1367–1389 (QHQTQAQAQTLNPAQSPSASQPT). Residues 1405–1422 (QQREMARRREQERRRREA) are compositionally biased toward basic and acidic residues.

This sequence belongs to the BET family. In terms of tissue distribution, widely expressed.

It localises to the nucleus. The protein localises to the chromosome. Functionally, chromatin reader protein that recognizes and binds acetylated histones and plays a key role in transmission of epigenetic memory across cell divisions and transcription regulation. Remains associated with acetylated chromatin throughout the entire cell cycle and provides epigenetic memory for postmitotic G1 gene transcription by preserving acetylated chromatin status and maintaining high-order chromatin structure. During interphase, plays a key role in regulating the transcription of signal-inducible genes by associating with the P-TEFb complex and recruiting it to promoters. This is Bromodomain-containing protein 4 (brd4) from Danio rerio (Zebrafish).